Consider the following 271-residue polypeptide: MSRVAQLDSIALDKELYGQFWSEFNAAFNTSEHKEEWELALNTVVFMCATRFLPHYGSSCTYGSALSGVVFQCRKRTLYVVTVLAGYVWKKITHIIFNGPHCGNQMMWLKLYKWVNLLYHGCDVTNFLRFLAAEGPNARAFLSPLYRAFNVHSTRLIRDGSAIASEFYSNSVFAGLEYQNRQLLWNALLELFSNTLLTKRGLLTFVKKPPRSRSTTTYKTVCPRCGGFPTNPYQIACCRANYCYVCVVKALEWSMCDACGSSGRLTASPVY.

At 1–2 (MS) the chain is on the peroxisomal matrix side. A helical membrane pass occupies residues 3 to 29 (RVAQLDSIALDKELYGQFWSEFNAAFN). The Cytoplasmic segment spans residues 30–33 (TSEH). The helical transmembrane segment at 34 to 60 (KEEWELALNTVVFMCATRFLPHYGSSC) threads the bilayer. At 61–77 (TYGSALSGVVFQCRKRT) the chain is on the peroxisomal matrix side. Residues 78–97 (LYVVTVLAGYVWKKITHIIF) traverse the membrane as a helical segment. Topologically, residues 98–101 (NGPH) are cytoplasmic. Residues 102–133 (CGNQMMWLKLYKWVNLLYHGCDVTNFLRFLAA) form a helical membrane-spanning segment. The Peroxisomal matrix portion of the chain corresponds to 134–175 (EGPNARAFLSPLYRAFNVHSTRLIRDGSAIASEFYSNSVFAG). Residues 176–197 (LEYQNRQLLWNALLELFSNTLL) traverse the membrane as a helical segment. Topologically, residues 198–271 (TKRGLLTFVK…SGRLTASPVY (74 aa)) are cytoplasmic. Zn(2+) contacts are provided by C222, C225, C237, C238, C243, C246, C256, and C259. The RING-type zinc-finger motif lies at 222–259 (CPRCGGFPTNPYQIACCRANYCYVCVVKALEWSMCDAC).

This sequence belongs to the pex2/pex10/pex12 family. As to quaternary structure, component of the PEX2-PEX10-PEX12 retrotranslocation channel, composed of PEX2, PEX10 and PEX12.

It is found in the peroxisome membrane. It carries out the reaction [E2 ubiquitin-conjugating enzyme]-S-ubiquitinyl-L-cysteine + [acceptor protein]-L-cysteine = [E2 ubiquitin-conjugating enzyme]-L-cysteine + [acceptor protein]-S-ubiquitinyl-L-cysteine.. Its pathway is protein modification; protein ubiquitination. In terms of biological role, E3 ubiquitin-protein ligase component of a retrotranslocation channel required for peroxisome organization by mediating export of the PEX5 receptor from peroxisomes to the cytosol, thereby promoting PEX5 recycling. The retrotranslocation channel is composed of PEX2, PEX10 and PEX12; each subunit contributing transmembrane segments that coassemble into an open channel that specifically allows the passage of PEX5 through the peroxisomal membrane. PEX2 also regulates peroxisome organization by acting as a E3 ubiquitin-protein ligase. PEX2 ubiquitinates PEX5 during its passage through the retrotranslocation channel: catalyzes monoubiquitination of PEX5 at 'Cys-6', a modification that acts as a signal for PEX5 extraction into the cytosol. The sequence is that of Peroxisomal biogenesis factor 2 from Saccharomyces cerevisiae (strain ATCC 204508 / S288c) (Baker's yeast).